The primary structure comprises 253 residues: Ubiquinone/menaquinone biosynthesis C-methyltransferase UbiE (253 aa).

Residues Thr76, Asp97, and 125-126 contribute to the S-adenosyl-L-methionine site; that span reads DA.

Belongs to the class I-like SAM-binding methyltransferase superfamily. MenG/UbiE family.

It carries out the reaction a 2-demethylmenaquinol + S-adenosyl-L-methionine = a menaquinol + S-adenosyl-L-homocysteine + H(+). It catalyses the reaction a 2-methoxy-6-(all-trans-polyprenyl)benzene-1,4-diol + S-adenosyl-L-methionine = a 5-methoxy-2-methyl-3-(all-trans-polyprenyl)benzene-1,4-diol + S-adenosyl-L-homocysteine + H(+). It functions in the pathway quinol/quinone metabolism; menaquinone biosynthesis; menaquinol from 1,4-dihydroxy-2-naphthoate: step 2/2. The protein operates within cofactor biosynthesis; ubiquinone biosynthesis. Methyltransferase required for the conversion of demethylmenaquinol (DMKH2) to menaquinol (MKH2) and the conversion of 2-polyprenyl-6-methoxy-1,4-benzoquinol (DDMQH2) to 2-polyprenyl-3-methyl-6-methoxy-1,4-benzoquinol (DMQH2). This chain is Ubiquinone/menaquinone biosynthesis C-methyltransferase UbiE, found in Azotobacter vinelandii (strain DJ / ATCC BAA-1303).